A 1121-amino-acid polypeptide reads, in one-letter code: MEAKQESSTVWSTASNNDTGNTPQVHFEAGAVAQIVYSGDQSDRTQQQVVYAADGSSYTSVESAEHTLVYIHPADGTQSQLAVTNAALPTLTEASSSPLGATDSTVDSEDEEEDNDSEDSEMDDWEPRALQPFTPQNLWCEDCNNANPAACIKHGPLHPILNRPVMSKARASLPLVLYIDRFLGGVFTKRRIPKRTQFGPLEGPLVRQSELLDTHIHLKLYMLDPEKEGERAQDLWFDLSDEERCNWMMFVRPAQNHLEQNLVAYQYGSDIFYTSIKNIQPKQELKVWYAASYAEFVNQKVHDVTEEERKVLREQEKNWPCYECNRRFMSSEQLQQHLNMHDDKLNLIQRPKSRGRGRGRKRFGGARRPGRRTKFLCPQTPVESADKTQELLASVDKLQFEERTDGALNGLKVVEMAAESMETETEDALDPPPIHTESLQDEEDSVTPPPVTEIPESAKDDLSHTSPIDPHLTPQDMRRARRIRNAALKHLFIRKSFRPFKCPQCGKAFRDKEKLEQHMRFHGRDGCRHVCHQCGKGFLSSTSLEDHLVLHSDQRNYSCLFCAESYDRLELLKVHVGIHMVNGCFLCPSCKKSFTDFIQVKKHVRSFHSEKVFQCSECDKAFCRPDKLRLHMLRHSDRKDFLCSTCGKQFKRKDKLREHMQRMHNPEREAKKADRIHRTKALKQKEPTTDFESFMFKCRLCMMGFRRRGMLVNHLSKRHPEMRLEEVPELTLPIIKPNRDYYCQYCDKVYKSASKRKAHILKNHPGAELPPSIRKLRPAGPGEPDPMLSTHTQLTGTIATAPVCCPHCAKQYSSKTKMVQHIRKKHPEYQYNSSSNIQAPLAATVISSTPAVITTDGTTAEAVVTTDLLTQAMTELSQTLTTDYRTAQGDFQRIQYIPVSQAGGGLSQPQHIQLQVVQVAPASSPHSQHSTVDVSQLHDPHSYSQHSIQVQHIQVAEPTAAVQANAQVSGQPLSPSSQQAAQELSTAQLTPVTLAQQTLQTSSNQTQGATQHAYLPSNWNYRSYPSEIQMMALPHTQYVIAEASTPVTAAVNSSQVKTTHYVISDGQTELDGKQVSVPSTATQGHPDPLEQPAGGQQATTQYIITTTTNGAGASEVHITKP.

Disordered regions lie at residues 1–24 (MEAKQESSTVWSTASNNDTGNTPQ) and 92–125 (TEASSSPLGATDSTVDSEDEEEDNDSEDSEMDDW). The segment covering 106–124 (VDSEDEEEDNDSEDSEMDD) has biased composition (acidic residues). The SET domain occupies 173–290 (LPLVLYIDRF…PKQELKVWYA (118 aa)). Residues 192 to 295 (IPKRTQFGPL…KVWYAASYAE (104 aa)) form an N-terminal PR domain; essential for transcriptional activation region. The C2H2-type 1 zinc finger occupies 319–341 (WPCYECNRRFMSSEQLQQHLNMH). Disordered stretches follow at residues 350–387 (RPKSRGRGRGRKRFGGARRPGRRTKFLCPQTPVESADK) and 419–473 (ESME…PHLT). Positions 351–374 (PKSRGRGRGRKRFGGARRPGRRTK) are enriched in basic residues. 9 consecutive C2H2-type zinc fingers follow at residues 500–522 (FKCPQCGKAFRDKEKLEQHMRFH), 529–551 (HVCHQCGKGFLSSTSLEDHLVLH), 557–579 (YSCLFCAESYDRLELLKVHVGIH), 585–608 (FLCPSCKKSFTDFIQVKKHVRSFH), 613–635 (FQCSECDKAFCRPDKLRLHMLRH), 641–664 (FLCSTCGKQFKRKDKLREHMQRMH), 696–719 (FKCRLCMMGFRRRGMLVNHLSKRH), 741–764 (YYCQYCDKVYKSASKRKAHILKNH), and 803–826 (VCCPHCAKQYSSKTKMVQHIRKKH). The interval 871-1101 (QAMTELSQTL…PAGGQQATTQ (231 aa)) is C-terminal glutamine-rich region; essential for transcriptional activation. The tract at residues 1077–1097 (VPSTATQGHPDPLEQPAGGQQ) is disordered.

It belongs to the class V-like SAM-binding methyltransferase superfamily.

It localises to the nucleus. Its function is as follows. Transcriptional activator, essential for early embryonic development and survival of embryonic stem cells (ESCs). Supports cell growth and survival during early development by transcriptionally activating the expression of the translation initiation factor EIF3B, to sustain global translation. Activates the transcription of FLNC. In Danio rerio (Zebrafish), this protein is PR domain zinc finger protein 10 (prdm10).